The primary structure comprises 221 residues: Ribosomal RNA small subunit methyltransferase G (221 aa).

Residues Gly-89, Leu-94, 140-141 (VE), and Arg-154 each bind S-adenosyl-L-methionine.

This sequence belongs to the methyltransferase superfamily. RNA methyltransferase RsmG family.

Its subcellular location is the cytoplasm. It carries out the reaction guanosine(527) in 16S rRNA + S-adenosyl-L-methionine = N(7)-methylguanosine(527) in 16S rRNA + S-adenosyl-L-homocysteine. Its function is as follows. Specifically methylates the N7 position of guanine in position 527 of 16S rRNA. This is Ribosomal RNA small subunit methyltransferase G from Methylibium petroleiphilum (strain ATCC BAA-1232 / LMG 22953 / PM1).